The following is a 145-amino-acid chain: Large-conductance mechanosensitive channel (145 aa).

2 helical membrane passes run 16 to 36 (VVDL…VTSF) and 83 to 103 (GVFI…FMVI).

Belongs to the MscL family. As to quaternary structure, homopentamer.

The protein resides in the cell inner membrane. Channel that opens in response to stretch forces in the membrane lipid bilayer. May participate in the regulation of osmotic pressure changes within the cell. The protein is Large-conductance mechanosensitive channel of Geobacter metallireducens (strain ATCC 53774 / DSM 7210 / GS-15).